The chain runs to 359 residues: Alanine racemase, biosynthetic (359 aa).

Lysine 34 (proton acceptor; specific for D-alanine) is an active-site residue. Lysine 34 is subject to N6-(pyridoxal phosphate)lysine. A substrate-binding site is contributed by arginine 129. Tyrosine 255 acts as the Proton acceptor; specific for L-alanine in catalysis. Position 303 (methionine 303) interacts with substrate.

The protein belongs to the alanine racemase family. It depends on pyridoxal 5'-phosphate as a cofactor.

The enzyme catalyses L-alanine = D-alanine. Its pathway is amino-acid biosynthesis; D-alanine biosynthesis; D-alanine from L-alanine: step 1/1. The protein operates within cell wall biogenesis; peptidoglycan biosynthesis. In terms of biological role, catalyzes the interconversion of L-alanine and D-alanine. Provides the D-alanine required for cell wall biosynthesis. The protein is Alanine racemase, biosynthetic (alr) of Escherichia coli O6:H1 (strain CFT073 / ATCC 700928 / UPEC).